Here is a 609-residue protein sequence, read N- to C-terminus: Protein alan shepard (609 aa).

Pro residues predominate over residues 1–12 (MHPRYSPAPPPL). The tract at residues 1–96 (MHPRYSPAPP…ASVAAAPPTP (96 aa)) is disordered. Tyrosine 5 is subject to Phosphotyrosine. The segment covering 13–35 (HQQQQQQPPQQQQQQMGGPHQQQ) has biased composition (low complexity). Over residues 37–50 (GGVGPGTGHGGVGA) the composition is skewed to gly residues. Composition is skewed to low complexity over residues 51–68 (AVGA…NSQQ) and 83–92 (SSSAASVAAA). Phosphotyrosine is present on residues tyrosine 152 and tyrosine 168. The interval 190-252 (PATTTYGQRV…AQNQNQQGGE (63 aa)) is disordered. Residues 204–252 (SPSNTNSSSSSNTGSQSGTLSTSLSNTTNTNTTMGPNGTAQNQNQQGGE) are compositionally biased toward low complexity. RRM domains follow at residues 257–330 (TNLY…MAKQ) and 336–415 (TNLY…FADG). Residues 583-609 (MTDSEQASTAASPDEAYTQYPHQAAPK) form a disordered region.

Its function is as follows. Has a role in the perception of gravity. This Drosophila grimshawi (Hawaiian fruit fly) protein is Protein alan shepard.